The primary structure comprises 391 residues: Probable methanogen homoaconitase large subunit (391 aa).

3 residues coordinate [4Fe-4S] cluster: C275, C333, and C336.

It belongs to the aconitase/IPM isomerase family. LeuC type 2 subfamily. In terms of assembly, heterotetramer of 2 HacA and 2 HacB proteins.

It carries out the reaction (2R)-homocitrate = (2R,3S)-homoisocitrate. The enzyme catalyses (2R)-homocitrate = cis-homoaconitate + H2O. It catalyses the reaction (2R,3S)-homoisocitrate = cis-homoaconitate + H2O. The catalysed reaction is cis-(homo)2aconitate + H2O = (2R,3S)-iso(homo)2citrate. It carries out the reaction cis-(homo)3aconitate + H2O = (2R,3S)-iso(homo)3citrate. It participates in organic acid metabolism; 2-oxosuberate biosynthesis. Its function is as follows. Component of a hydro-lyase with broad substrate specificity for cis-unsaturated tricarboxylic acids. Catalyzes both the reversible dehydration of (R)-homocitrate ((R)-2-hydroxybutane-1,2,4-tricarboxylate) to produce cis-homoaconitate ((Z)-but-1-ene-1,2,4-tricarboxylate), and its hydration to homoisocitrate ((1R,2S)-1-hydroxybutane-1,2,4-tricarboxylate). Is also able to hydrate the analogous longer chain substrates cis-homo(2)-aconitate, cis-homo(3)-aconitate. These reactions are part of the biosynthesis pathway of coenzyme B. In Methanosarcina mazei (strain ATCC BAA-159 / DSM 3647 / Goe1 / Go1 / JCM 11833 / OCM 88) (Methanosarcina frisia), this protein is Probable methanogen homoaconitase large subunit (hacA).